The following is a 388-amino-acid chain: DNA replication and repair protein RecF (388 aa).

Residue 30–37 (GNNAQGKS) participates in ATP binding.

The protein belongs to the RecF family.

It localises to the cytoplasm. Functionally, the RecF protein is involved in DNA metabolism; it is required for DNA replication and normal SOS inducibility. RecF binds preferentially to single-stranded, linear DNA. It also seems to bind ATP. This Picosynechococcus sp. (strain ATCC 27264 / PCC 7002 / PR-6) (Agmenellum quadruplicatum) protein is DNA replication and repair protein RecF.